A 618-amino-acid polypeptide reads, in one-letter code: Membrane protein insertase YidC (618 aa).

The next 6 membrane-spanning stretches (helical) occupy residues 3-23, 363-383, 439-459, 478-498, 520-540, and 545-565; these read KNTITGLVLIGILLVGFSFLS, WGLSMGIVLLLLTIMVKIVVF, LPMLLQFPILMALFMFVPSAI, FITFPFHIPFLGNHLSLFCLL, PQMAAMKWMMYLMPIMFLFVL, and SGLNYYYFISTLISVVTMIIL.

It belongs to the OXA1/ALB3/YidC family. Type 1 subfamily. As to quaternary structure, interacts with the Sec translocase complex via SecD. Specifically interacts with transmembrane segments of nascent integral membrane proteins during membrane integration.

Its subcellular location is the cell inner membrane. Functionally, required for the insertion and/or proper folding and/or complex formation of integral membrane proteins into the membrane. Involved in integration of membrane proteins that insert both dependently and independently of the Sec translocase complex, as well as at least some lipoproteins. Aids folding of multispanning membrane proteins. This Bacteroides fragilis (strain ATCC 25285 / DSM 2151 / CCUG 4856 / JCM 11019 / LMG 10263 / NCTC 9343 / Onslow / VPI 2553 / EN-2) protein is Membrane protein insertase YidC.